The following is a 388-amino-acid chain: Succinate--CoA ligase [ADP-forming] subunit beta (388 aa).

The region spanning 9 to 244 (KQLFAEFGLP…PSQEDEREAH (236 aa)) is the ATP-grasp domain. ATP contacts are provided by residues lysine 46, 53–55 (GRG), glutamate 99, serine 102, and glutamate 107. Mg(2+) is bound by residues asparagine 199 and aspartate 213. Substrate contacts are provided by residues asparagine 264 and 321–323 (GIV).

This sequence belongs to the succinate/malate CoA ligase beta subunit family. Heterotetramer of two alpha and two beta subunits. Mg(2+) serves as cofactor.

It carries out the reaction succinate + ATP + CoA = succinyl-CoA + ADP + phosphate. The catalysed reaction is GTP + succinate + CoA = succinyl-CoA + GDP + phosphate. The protein operates within carbohydrate metabolism; tricarboxylic acid cycle; succinate from succinyl-CoA (ligase route): step 1/1. In terms of biological role, succinyl-CoA synthetase functions in the citric acid cycle (TCA), coupling the hydrolysis of succinyl-CoA to the synthesis of either ATP or GTP and thus represents the only step of substrate-level phosphorylation in the TCA. The beta subunit provides nucleotide specificity of the enzyme and binds the substrate succinate, while the binding sites for coenzyme A and phosphate are found in the alpha subunit. The sequence is that of Succinate--CoA ligase [ADP-forming] subunit beta from Vibrio atlanticus (strain LGP32) (Vibrio splendidus (strain Mel32)).